Here is a 398-residue protein sequence, read N- to C-terminus: Glucose-1-phosphate adenylyltransferase (398 aa).

Alpha-D-glucose 1-phosphate is bound by residues Tyr100, Gly165, 180-181 (EK), and Ser191.

The protein belongs to the bacterial/plant glucose-1-phosphate adenylyltransferase family. In terms of assembly, homotetramer.

The enzyme catalyses alpha-D-glucose 1-phosphate + ATP + H(+) = ADP-alpha-D-glucose + diphosphate. The protein operates within glycan biosynthesis; glycogen biosynthesis. In terms of biological role, involved in the biosynthesis of ADP-glucose, a building block required for the elongation reactions to produce glycogen. Catalyzes the reaction between ATP and alpha-D-glucose 1-phosphate (G1P) to produce pyrophosphate and ADP-Glc. The protein is Glucose-1-phosphate adenylyltransferase of Desulfitobacterium hafniense (strain DSM 10664 / DCB-2).